Reading from the N-terminus, the 1224-residue chain is MIDVNKFESMQIGLASPNKIRSWSYGEVKKPETINYRTLKPEKDGLFDERIFGPTKDWSCACGKYKGIRYRGIVCDRCGVEVTSAKVRRERMGHIELAAPVSHIWYFKGIPSRMGLVLDISPRALEEVIYFAAYIVIDAGDTDLEDKQLLTEAEYREKKAKFGDRFEAKMGAEAVKELLEQVDIDKEVHELKEELKTATGQKRTRAIRRLDILDAFKNSGNKPSWMVMDCIPVIPPDLRPMVQLDGGRFATSDLNDLYRRVINRNNRLKRLLDLNAPRIIVQNEKRMLQEAVDALIDNGRRGRPVVGPGNRPLKSLSHMLKGKQGRLRQNLLGKRVDYSGRSVIDVSPELKFYQCGVPRPMALELFKPFVMHELVKRGLASNIKNAKRKIDREDDDIWDILEDVIKERPVLLNRAPTLHRLGIQAFEPVLVPGKSIRLHPLACEAYNADFDGDQMAIHVPLSDEAVAESRLLMLAAHHILAPKDGKPIVTPSQDIVLGNYWLTQAERGREGEGMIFDSPAEAAIAYANGDIHYHTRIGLAADSMPEKPWPKGYEHGIFVTTYGKLVFNQIFPKDFYYINDPTQENLTHPVDERYFLQPGEDIHEKLDNMKLGQAFKKGFLSDSIAQIYKDYKVQRTSDFLDDLKELGYTVCTTSGLTIGVEDIPTISDKDDIVAEARKKVDVVSKQYRRGLITDEERHDRVISIWNNCKDIVQNEIAQIIHAPRNPITIMADSGARGNISNFTQLAGMRGLMAAPNGGMMEIPVTSNFREGLSVLEMFMSTHGARKGMTDTALKTANSGYLTRRLVDVAQDVIIREEDCGTDRGLTVHAITEGDEMIEPLFDRLVGRYTSKSVYDPETHEVICPADVLMDEDMAHKIVDAGVTEVTIRSVFTCNTQHGVCKKCYGMNLATGDDVEVGEAVGTVAAQSIGEPGTQLTMRNFHNGGVAGAADITQGLPRVQELFEARNPKGRATISEVTGEVTSIEEDPAEHTRQITVKGQTDTRTYDVPYTASVAVAEGDHVVRGDKLTLGSIDPKELIRVRDALTTEKYILSEIQKAYRMQGVEIADKHVEVMARQMLQKVRILDPGETDILPGELMDIGEFKARNREVIISGGIPATAQSVILGITKAALETNSFLSAASFQETTRVLTDASIRGKNDPLLGLKENVIIGKIIPAGTGMPVYREMEPKVDVPEDEKKKSVYSIADIEKKLAAADAEKDNGSAD.

The Zn(2+) site is built by Cys60, Cys62, Cys75, and Cys78. Mg(2+)-binding residues include Asp449, Asp451, and Asp453. Positions 819, 893, 900, and 903 each coordinate Zn(2+).

It belongs to the RNA polymerase beta' chain family. The RNAP catalytic core consists of 2 alpha, 1 beta, 1 beta' and 1 omega subunit. When a sigma factor is associated with the core the holoenzyme is formed, which can initiate transcription. Requires Mg(2+) as cofactor. Zn(2+) serves as cofactor.

The catalysed reaction is RNA(n) + a ribonucleoside 5'-triphosphate = RNA(n+1) + diphosphate. DNA-dependent RNA polymerase catalyzes the transcription of DNA into RNA using the four ribonucleoside triphosphates as substrates. This Lactobacillus johnsonii (strain CNCM I-12250 / La1 / NCC 533) protein is DNA-directed RNA polymerase subunit beta'.